The following is a 747-amino-acid chain: Protein O-mannosyl-transferase 1 (747 aa).

7 consecutive transmembrane segments (helical) span residues 30-50 (PLVV…LGLL), 90-110 (FGHM…NFLW), 121-141 (VPVW…VPMA), 176-196 (LLES…LKFF), 205-225 (SVHW…AVGI), 228-248 (MGIF…WHLI), and 267-287 (VALL…HLML). MIR domains lie at 318 to 381 (PLEV…VKDP), 392 to 449 (PRPV…LDIV), and 453 to 513 (SNQD…VEEH). Asn435, Asn471, and Asn539 each carry an N-linked (GlcNAc...) asparagine glycan. The next 3 membrane-spanning stretches (helical) occupy residues 597–617 (IVIW…FFWY), 636–656 (WVLA…PFFL), and 660–680 (MLFL…LPIV).

This sequence belongs to the glycosyltransferase 39 family.

The protein resides in the endoplasmic reticulum membrane. The enzyme catalyses a di-trans,poly-cis-dolichyl beta-D-mannosyl phosphate + L-seryl-[protein] = 3-O-(alpha-D-mannosyl)-L-seryl-[protein] + a di-trans,poly-cis-dolichyl phosphate + H(+). It carries out the reaction a di-trans,poly-cis-dolichyl beta-D-mannosyl phosphate + L-threonyl-[protein] = 3-O-(alpha-D-mannosyl)-L-threonyl-[protein] + a di-trans,poly-cis-dolichyl phosphate + H(+). Its pathway is protein modification; protein glycosylation. Functionally, transfers mannosyl residues to the hydroxyl group of serine or threonine residues. Coexpression of both POMT1 and POMT2 is necessary for enzyme activity, expression of either POMT1 or POMT2 alone is insufficient. Essentially dedicated to O-mannosylation of alpha-DAG1 and few other proteins but not of cadherins and protocaherins. This Rattus norvegicus (Rat) protein is Protein O-mannosyl-transferase 1 (Pomt1).